We begin with the raw amino-acid sequence, 618 residues long: Serine/threonine-protein kinase pkn1 (618 aa).

The Protein kinase domain occupies 15 to 381 (YKILCYLRKG…KEEVKPQPLF (367 aa)). ATP is bound by residues 21 to 29 (LRKGLWCQD) and K44.

It belongs to the protein kinase superfamily. Ser/Thr protein kinase family. In terms of processing, autophosphorylated on serine and threonine residues.

It carries out the reaction L-seryl-[protein] + ATP = O-phospho-L-seryl-[protein] + ADP + H(+). The catalysed reaction is L-threonyl-[protein] + ATP = O-phospho-L-threonyl-[protein] + ADP + H(+). In terms of biological role, together with the serine/threonine kinase PknD, may play a role in the specific interactions with host proteins during intracellular growth. The polypeptide is Serine/threonine-protein kinase pkn1 (pkn1) (Chlamydia caviae (strain ATCC VR-813 / DSM 19441 / 03DC25 / GPIC) (Chlamydophila caviae)).